We begin with the raw amino-acid sequence, 64 residues long: Large ribosomal subunit protein bL35 (64 aa).

The span at 1 to 14 shows a compositional bias: basic residues; sequence MKQKTHKGTAKRIK. Positions 1–48 are disordered; it reads MKQKTHKGTAKRIKVTGSGKLRREQANRRHLLEGKPSKRTRRLKGTED. Basic and acidic residues predominate over residues 21–36; it reads LRREQANRRHLLEGKP.

The protein belongs to the bacterial ribosomal protein bL35 family.

This chain is Large ribosomal subunit protein bL35, found in Corynebacterium aurimucosum (strain ATCC 700975 / DSM 44827 / CIP 107346 / CN-1) (Corynebacterium nigricans).